A 2382-amino-acid chain; its full sequence is Nonribosomal peptide synthetase chyA (2382 aa).

Residues 204-607 are adenylation 1; the sequence is QKCATQPESI…LGRKDHQVKI (404 aa). Residues 745 to 821 enclose the Carrier 1 domain; the sequence is TPTTQNQRIL…DMASVLVKDH (77 aa). Ser-782 carries the post-translational modification O-(pantetheine 4'-phosphoryl)serine. The segment at 857-1269 is condensation 1; it reads EDVYPCTHMQ…LVPPEDMATL (413 aa). The tract at residues 1294–1687 is adenylation 2; it reads GQPDTLAIHS…VGRKDDQVKL (394 aa). One can recognise a Carrier 2 domain in the interval 1833-1909; the sequence is VPVSIHGRKV…GLSLKCATEN (77 aa). Position 1870 is an O-(pantetheine 4'-phosphoryl)serine (Ser-1870). Residues 1967 to 2373 are condensation 2; that stretch reads MTLHNFYSRY…FSDVIESLAS (407 aa).

The protein belongs to the NRP synthetase family.

Its pathway is pigment biosynthesis. Nonribosomal peptide synthetase; part of the gene cluster that mediates the biosynthesis of the yellow pigment chrysogine. the NRPS chyA mediates the condensation of anthranilic acid and alanine into the intermediate 2-(2-aminopropanamido)benzoic acid. The remainder of the pathway is highly branched yielding at least 13 chrysogine-related compounds. The malonyl transferase chyE converts 2-(2-aminopropanamido)benzoic acid and 2-(2-aminopropanamido)benzamidine into 2-(2-(2-carboxyacetamido)propanamido)benzoic acid and 3-((1-((2-carbamoylphenyl)amino)-1-oxopropan-2-yl)amino)-3-oxopropanoic acid, respectively. ChyD is an amidase, being responsible for the amidation of the carboxylic acid moiety of 2-(2-aminopropanamido)benzoic acid, 2-(2-(2-carboxyacetamido)propanamido)benzoic acid and 2-(2-((4-amino-1-carboxy-4-oxobutyl)amino)propanamido)benzoic acid. ChyC is involved in the same reactions as ChyD, but plays a more minor role in the amidation reactions compared to chyD. The oxidoreductases chyH and chyM are involved in oxidation reactions that form N-pyruvoylanthranilamide from 2-(2-aminopropanamido)benzamidine and (1-((2-carbamoylphenyl)amino)-1-oxopropan-2-yl)glutamine, respectively. N-pyruvoylanthranilamide is further converted via two further branches in the pathway, yielding chrysogine and additional chrysogine-related coumpounds. Chrysogine is likely formed by a spontaneous ring closure from N-pyruvoylanthranilamide. The chain is Nonribosomal peptide synthetase chyA from Penicillium rubens (strain ATCC 28089 / DSM 1075 / NRRL 1951 / Wisconsin 54-1255) (Penicillium chrysogenum).